A 320-amino-acid chain; its full sequence is Heterogeneous nuclear ribonucleoprotein A1-like 2 (320 aa).

Positions 4–94 are globular A domain; that stretch reads SASPKEPEQL…EPKRAVSRED (91 aa). Phosphoserine is present on residues Ser-6 and Ser-22. 2 RRM domains span residues 14–97 and 105–184; these read RKLF…DSQR and KKIF…LPKQ. The segment at 95-185 is globular B domain; that stretch reads SQRPGAHLTV…EVRKALPKQE (91 aa). The interval 181–216 is disordered; the sequence is LPKQEMASASSSQRGRRGSGNFGGGRGDGFGGNDNF. An asymmetric dimethylarginine; alternate mark is found at Arg-194, Arg-206, Arg-218, and Arg-225. Omega-N-methylarginine; alternate occurs at positions 194, 206, 218, and 225. The segment covering 198-216 has biased composition (gly residues); sequence GSGNFGGGRGDGFGGNDNF. Positions 218–240 are RNA-binding RGG-box; it reads RGGNFSGRGGFGGSCGGGGYGGS. The segment at 268 to 305 is nuclear targeting sequence; the sequence is NQSSNFGPMKGGNFGGRSSGPYGGGGQYFAKPQNQGGY. Positions 271 to 320 are disordered; that stretch reads SNFGPMKGGNFGGRSSGPYGGGGQYFAKPQNQGGYGVSSSSSSYGSGRRF. Residues 276 to 294 are compositionally biased toward gly residues; sequence MKGGNFGGRSSGPYGGGGQ. At Arg-284 the chain carries Omega-N-methylarginine. Position 298 is an N6-acetyllysine (Lys-298). Over residues 307 to 320 the composition is skewed to low complexity; that stretch reads VSSSSSSYGSGRRF.

It is found in the nucleus. The protein localises to the cytoplasm. Its function is as follows. Involved in the packaging of pre-mRNA into hnRNP particles, transport of poly(A) mRNA from the nucleus to the cytoplasm and may modulate splice site selection. In Homo sapiens (Human), this protein is Heterogeneous nuclear ribonucleoprotein A1-like 2 (HNRNPA1L2).